We begin with the raw amino-acid sequence, 565 residues long: Periplasmic trehalase (565 aa).

Residues 1-30 (MKSPTPSRPQKMALIPACIFLCFAALSVQA) form the signal peptide. Substrate-binding positions include Arg-152, 159-160 (WD), Asn-196, 205-207 (RSQ), 277-279 (RPE), and Gly-310. Catalysis depends on proton donor/acceptor residues Asp-312 and Glu-496. Substrate is bound at residue Glu-511. The interval 539 to 565 (CDNVPATRPLSESTTQPLKQKEAEPTP) is disordered.

It belongs to the glycosyl hydrolase 37 family. Monomer.

It localises to the periplasm. The catalysed reaction is alpha,alpha-trehalose + H2O = alpha-D-glucose + beta-D-glucose. Provides the cells with the ability to utilize trehalose at high osmolarity by splitting it into glucose molecules that can subsequently be taken up by the phosphotransferase-mediated uptake system. In Escherichia coli (strain SMS-3-5 / SECEC), this protein is Periplasmic trehalase.